The sequence spans 334 residues: GTP 3',8-cyclase (334 aa).

Positions 11-236 (GFNRKIDYLR…ESTESSQGPA (226 aa)) constitute a Radical SAM core domain. R20 serves as a coordination point for GTP. The [4Fe-4S] cluster site is built by C27 and C31. Y33 contacts S-adenosyl-L-methionine. [4Fe-4S] cluster is bound at residue C34. Residue R69 participates in GTP binding. G73 is an S-adenosyl-L-methionine binding site. T100 is a GTP binding site. S124 provides a ligand contact to S-adenosyl-L-methionine. Residue K161 coordinates GTP. M195 is a binding site for S-adenosyl-L-methionine. Positions 260 and 263 each coordinate [4Fe-4S] cluster. Residue 265-267 (RVR) coordinates GTP. Position 277 (C277) interacts with [4Fe-4S] cluster.

It belongs to the radical SAM superfamily. MoaA family. Monomer and homodimer. Requires [4Fe-4S] cluster as cofactor.

It catalyses the reaction GTP + AH2 + S-adenosyl-L-methionine = (8S)-3',8-cyclo-7,8-dihydroguanosine 5'-triphosphate + 5'-deoxyadenosine + L-methionine + A + H(+). The protein operates within cofactor biosynthesis; molybdopterin biosynthesis. Its function is as follows. Catalyzes the cyclization of GTP to (8S)-3',8-cyclo-7,8-dihydroguanosine 5'-triphosphate. This Pseudomonas putida (strain GB-1) protein is GTP 3',8-cyclase.